The following is a 319-amino-acid chain: Ferrochelatase (319 aa).

Fe cation is bound by residues histidine 193 and glutamate 274.

The protein belongs to the ferrochelatase family.

It localises to the cytoplasm. It carries out the reaction heme b + 2 H(+) = protoporphyrin IX + Fe(2+). The protein operates within porphyrin-containing compound metabolism; protoheme biosynthesis; protoheme from protoporphyrin-IX: step 1/1. In terms of biological role, catalyzes the ferrous insertion into protoporphyrin IX. The chain is Ferrochelatase from Actinobacillus pleuropneumoniae serotype 7 (strain AP76).